Consider the following 143-residue polypeptide: Large ribosomal subunit protein uL13 (143 aa).

It belongs to the universal ribosomal protein uL13 family. In terms of assembly, part of the 50S ribosomal subunit.

This protein is one of the early assembly proteins of the 50S ribosomal subunit, although it is not seen to bind rRNA by itself. It is important during the early stages of 50S assembly. This chain is Large ribosomal subunit protein uL13, found in Clostridioides difficile (strain 630) (Peptoclostridium difficile).